The following is a 441-amino-acid chain: Glutamate--tRNA ligase 2 (441 aa).

A 'HIGH' region motif is present at residues 9–19 (PSPTGYIHVGN). The 'KMSKS' region signature appears at 239-243 (ALSKR). An ATP-binding site is contributed by lysine 242.

This sequence belongs to the class-I aminoacyl-tRNA synthetase family. Glutamate--tRNA ligase type 1 subfamily. As to quaternary structure, monomer.

It localises to the cytoplasm. The enzyme catalyses tRNA(Glu) + L-glutamate + ATP = L-glutamyl-tRNA(Glu) + AMP + diphosphate. Functionally, catalyzes the attachment of glutamate to tRNA(Glu) in a two-step reaction: glutamate is first activated by ATP to form Glu-AMP and then transferred to the acceptor end of tRNA(Glu). This chain is Glutamate--tRNA ligase 2, found in Cereibacter sphaeroides (strain ATCC 17023 / DSM 158 / JCM 6121 / CCUG 31486 / LMG 2827 / NBRC 12203 / NCIMB 8253 / ATH 2.4.1.) (Rhodobacter sphaeroides).